The following is a 180-amino-acid chain: ATP-dependent protease subunit HslV (180 aa).

Residue T7 is part of the active site. Na(+)-binding residues include A162, C165, and T168.

The protein belongs to the peptidase T1B family. HslV subfamily. A double ring-shaped homohexamer of HslV is capped on each side by a ring-shaped HslU homohexamer. The assembly of the HslU/HslV complex is dependent on binding of ATP.

It localises to the cytoplasm. It carries out the reaction ATP-dependent cleavage of peptide bonds with broad specificity.. Allosterically activated by HslU binding. Functionally, protease subunit of a proteasome-like degradation complex believed to be a general protein degrading machinery. The polypeptide is ATP-dependent protease subunit HslV (Dichelobacter nodosus (strain VCS1703A)).